Here is a 394-residue protein sequence, read N- to C-terminus: Protein STRICTOSIDINE SYNTHASE-LIKE 1 (394 aa).

The signal sequence occupies residues 1–21 (MESLLLIAYAFLYLFLLSHEA). Residues 61 to 73 (GLEKRPNHSEDNP) are compositionally biased toward basic and acidic residues. The tract at residues 61-92 (GLEKRPNHSEDNPPSRGWTGEPGLDPRGEGPY) is disordered. N-linked (GlcNAc...) asparagine glycans are attached at residues Asn-67, Asn-122, and Asn-196.

This sequence belongs to the strictosidine synthase family.

It is found in the vacuole. In Arabidopsis thaliana (Mouse-ear cress), this protein is Protein STRICTOSIDINE SYNTHASE-LIKE 1.